Reading from the N-terminus, the 952-residue chain is Glycine dehydrogenase (decarboxylating) (952 aa).

Lys-696 carries the post-translational modification N6-(pyridoxal phosphate)lysine.

This sequence belongs to the GcvP family. In terms of assembly, the glycine cleavage system is composed of four proteins: P, T, L and H. It depends on pyridoxal 5'-phosphate as a cofactor.

The catalysed reaction is N(6)-[(R)-lipoyl]-L-lysyl-[glycine-cleavage complex H protein] + glycine + H(+) = N(6)-[(R)-S(8)-aminomethyldihydrolipoyl]-L-lysyl-[glycine-cleavage complex H protein] + CO2. Its function is as follows. The glycine cleavage system catalyzes the degradation of glycine. The P protein binds the alpha-amino group of glycine through its pyridoxal phosphate cofactor; CO(2) is released and the remaining methylamine moiety is then transferred to the lipoamide cofactor of the H protein. This Pelagibacter ubique (strain HTCC1062) protein is Glycine dehydrogenase (decarboxylating).